The following is a 66-amino-acid chain: Small ribosomal subunit protein bS21 (66 aa).

Residues 47–66 (KAQEAARRKRKFARKRMYED) form a disordered region. Residues 53–66 (RRKRKFARKRMYED) show a composition bias toward basic residues.

This sequence belongs to the bacterial ribosomal protein bS21 family.

The sequence is that of Small ribosomal subunit protein bS21 from Rickettsia bellii (strain RML369-C).